Here is a 365-residue protein sequence, read N- to C-terminus: Putative F-box/kelch-repeat protein At4g39290 (365 aa).

An F-box domain is found at 10–58 (QMTFSMLPDDLVLNCLARVSKVYYPSLSFVSKKFRSLIASTELQELRSF). 2 Kelch repeats span residues 118-165 (DIYA…CVLN) and 167-213 (KIYV…KIVG).

The protein is Putative F-box/kelch-repeat protein At4g39290 of Arabidopsis thaliana (Mouse-ear cress).